A 101-amino-acid polypeptide reads, in one-letter code: MAKMSMKNRELKRQLTVAKYAKKRAELKAIIVDLNASPEARWEATVALQKQPRDASAARMRNRCRITGRPHGVYRKFGLGRNKLREAAMRGDVPGLVKASW.

It belongs to the universal ribosomal protein uS14 family. Part of the 30S ribosomal subunit. Contacts proteins S3 and S10.

Binds 16S rRNA, required for the assembly of 30S particles and may also be responsible for determining the conformation of the 16S rRNA at the A site. The sequence is that of Small ribosomal subunit protein uS14 from Pseudomonas syringae pv. syringae (strain B728a).